The sequence spans 146 residues: Nitric oxide reductase subunit C (146 aa).

The chain crosses the membrane as a helical; Signal-anchor span at residues 13-29 (IYFGGSVFFILLFLALT). 3 residues coordinate heme c: Cys61, Cys64, and His65.

As to quaternary structure, heterodimer of cytochromes b (large subunit) and c (small subunit).

It localises to the cell membrane. Functionally, component of the anaerobic respiratory chain that transforms nitrate to dinitrogen (denitrification). This Pseudomonas aeruginosa (strain ATCC 15692 / DSM 22644 / CIP 104116 / JCM 14847 / LMG 12228 / 1C / PRS 101 / PAO1) protein is Nitric oxide reductase subunit C (norC).